We begin with the raw amino-acid sequence, 114 residues long: MEMVNKIACFVLLCMVVVAPHAEALTCGQVTSTLAPCLPYLMNRGPLGGCCGGVKGLLGQAQTTVDRQAACACLKSAASSFTDLDLGKAASLPSTCNVNIPYKISPSTDCSKVQ.

The first 23 residues, M1 to E23, serve as a signal peptide directing secretion. Cystine bridges form between C27–C73, C37–C50, C51–C96, and C71–C110.

It belongs to the plant LTP family.

Functionally, plant non-specific lipid-transfer proteins transfer phospholipids as well as galactolipids across membranes. May play a role in wax or cutin deposition in the cell walls of expanding epidermal cells and certain secretory tissues. The polypeptide is Non-specific lipid-transfer protein 2 (Solanum chilense (Tomato)).